Consider the following 203-residue polypeptide: ATP-dependent Clp protease proteolytic subunit 1 (203 aa).

The Nucleophile role is filled by Ser-101. His-126 is an active-site residue.

The protein belongs to the peptidase S14 family. In terms of assembly, fourteen ClpP subunits assemble into 2 heptameric rings which stack back to back to give a disk-like structure with a central cavity, resembling the structure of eukaryotic proteasomes.

It localises to the cytoplasm. It carries out the reaction Hydrolysis of proteins to small peptides in the presence of ATP and magnesium. alpha-casein is the usual test substrate. In the absence of ATP, only oligopeptides shorter than five residues are hydrolyzed (such as succinyl-Leu-Tyr-|-NHMec, and Leu-Tyr-Leu-|-Tyr-Trp, in which cleavage of the -Tyr-|-Leu- and -Tyr-|-Trp bonds also occurs).. In terms of biological role, cleaves peptides in various proteins in a process that requires ATP hydrolysis. Has a chymotrypsin-like activity. Plays a major role in the degradation of misfolded proteins. The polypeptide is ATP-dependent Clp protease proteolytic subunit 1 (Synechococcus sp. (strain JA-2-3B'a(2-13)) (Cyanobacteria bacterium Yellowstone B-Prime)).